The chain runs to 132 residues: UPF0299 membrane protein YohJ (132 aa).

The next 4 membrane-spanning stretches (helical) occupy residues 7–27 (IIWQ…AGIF), 31–51 (LLPI…VLLA), 63–83 (GCYV…VGVM), and 93–113 (FGPV…VVSW).

This sequence belongs to the UPF0299 family.

Its subcellular location is the cell inner membrane. The sequence is that of UPF0299 membrane protein YohJ from Salmonella agona (strain SL483).